The following is a 369-amino-acid chain: Maltose/maltodextrin import ATP-binding protein MalK (369 aa).

The region spanning 4–234 is the ABC transporter domain; it reads VQLRNVTKAW…PADRFVAGFI (231 aa). 36 to 43 serves as a coordination point for ATP; that stretch reads GPSGCGKS.

This sequence belongs to the ABC transporter superfamily. Maltooligosaccharide importer (TC 3.A.1.1.1) family. In terms of assembly, the complex is composed of two ATP-binding proteins (MalK), two transmembrane proteins (MalG and MalK) and a solute-binding protein (MalE).

It localises to the cell inner membrane. The enzyme catalyses D-maltose(out) + ATP + H2O = D-maltose(in) + ADP + phosphate + H(+). In terms of biological role, part of the ABC transporter complex MalEFGK involved in maltose/maltodextrin import. Responsible for energy coupling to the transport system. In Salmonella paratyphi A (strain ATCC 9150 / SARB42), this protein is Maltose/maltodextrin import ATP-binding protein MalK.